The sequence spans 352 residues: MSIFDVAVWDEAEHCARMLDQRRLPNEVVNLYYRSAAEMADGIRDMVVRGAPAIGCACAYGVAVEAKRLAKQGIPSHWPTAMAEGMATLRQSRPTAVNLTWALERMAPLLETTPPHEVPQRLLQEAHAIREEDIASCRAMGAHGAALLPTNSQRPTVIMTHCNAGALATAGYGTALGVIRAAHTAQQGNLRVIANETRPYLQGARLTAWELLQDHIDTTLITDNMAGWLMANGEVDAVVVGSDRVAANGDVANKIGTYTLAVLARRHDIPFFVAAPLSTVDLRCPTGREIPIEERSANEVTHCMGIRSAADGVKVRNPAFDVTPAELITAFICEKGVAKAPDQEKIAKLFQI.

Residues 49–51 (RGA), arginine 93, and glutamine 202 contribute to the substrate site. Aspartate 243 acts as the Proton donor in catalysis. 253-254 (NK) is a substrate binding site.

It belongs to the eIF-2B alpha/beta/delta subunits family. MtnA subfamily.

It catalyses the reaction 5-(methylsulfanyl)-alpha-D-ribose 1-phosphate = 5-(methylsulfanyl)-D-ribulose 1-phosphate. It participates in amino-acid biosynthesis; L-methionine biosynthesis via salvage pathway; L-methionine from S-methyl-5-thio-alpha-D-ribose 1-phosphate: step 1/6. Functionally, catalyzes the interconversion of methylthioribose-1-phosphate (MTR-1-P) into methylthioribulose-1-phosphate (MTRu-1-P). This chain is Methylthioribose-1-phosphate isomerase, found in Magnetococcus marinus (strain ATCC BAA-1437 / JCM 17883 / MC-1).